The primary structure comprises 76 residues: uncharacterized protein (76 aa).

A helical membrane pass occupies residues 18–38 (FISALFFFNAVCIVSDNLLII).

Its subcellular location is the cell membrane. This is an uncharacterized protein from Escherichia coli O6:H1 (strain CFT073 / ATCC 700928 / UPEC).